The sequence spans 659 residues: RNA-binding E3 ubiquitin-protein ligase MEX3C (659 aa).

Low complexity predominate over residues 1–15 (MPSGSSAALALAAAP). Residues 1–140 (MPSGSSAALA…EEAEEEDRSS (140 aa)) form a disordered region. The span at 16–37 (APLPQPPPPPPPPPPPLPPPSG) shows a compositional bias: pro residues. The segment covering 64–82 (EPGAPALRAPAAAAQGQAR) has biased composition (low complexity). Positions 83 to 94 (RAAELSPEERAP) are enriched in basic and acidic residues. Position 88 is a phosphoserine (Ser-88). Over residues 104–137 (AELELEEDEEEGEEAELDGDLLEEEELEEAEEED) the composition is skewed to acidic residues. 2 KH domains span residues 232–293 (TTEC…KREI) and 326–387 (QTTV…REEI). Residues 513-569 (FEPVNPLSGFGSDPSGNMKTQRRGSQPSTPRLSPTFPESIEHPLARRVRSDPPSTGN) form a disordered region. The segment covering 526–544 (PSGNMKTQRRGSQPSTPRL) has biased composition (polar residues). Phosphoserine occurs at positions 537 and 545. The span at 551–562 (SIEHPLARRVRS) shows a compositional bias: basic and acidic residues. An RING-type zinc finger spans residues 608–648 (CVICFENEVIAALVPCGHNLFCMECANKICEKRTPSCPVCQ).

Interacts with USP7, which antagonizes the ability to degrade mRNA. As to expression, highest levels found in fetal brain and testis. Also expressed in thymus, salivary gland and uterus. Highly expressed in cells of the innate immune system, in particular activated NK cells. Week expression in the intestine.

Its subcellular location is the cytoplasm. It localises to the nucleus. It carries out the reaction S-ubiquitinyl-[E2 ubiquitin-conjugating enzyme]-L-cysteine + [acceptor protein]-L-lysine = [E2 ubiquitin-conjugating enzyme]-L-cysteine + N(6)-ubiquitinyl-[acceptor protein]-L-lysine.. Functionally, E3 ubiquitin ligase responsible for the post-transcriptional regulation of common HLA-A allotypes. Binds to the 3' UTR of HLA-A2 mRNA, and regulates its levels by promoting mRNA decay. RNA binding is sufficient to prevent translation, but ubiquitin ligase activity is required for mRNA degradation. This is RNA-binding E3 ubiquitin-protein ligase MEX3C (MEX3C) from Homo sapiens (Human).